Consider the following 697-residue polypeptide: Elongation factor G (697 aa).

The tr-type G domain maps to 10-285 (ERTRNIGIMA…AVVDYLPSPL (276 aa)). GTP contacts are provided by residues 19-26 (AHIDAGKT), 83-87 (DTPGH), and 137-140 (NKMD).

It belongs to the TRAFAC class translation factor GTPase superfamily. Classic translation factor GTPase family. EF-G/EF-2 subfamily.

It is found in the cytoplasm. Its function is as follows. Catalyzes the GTP-dependent ribosomal translocation step during translation elongation. During this step, the ribosome changes from the pre-translocational (PRE) to the post-translocational (POST) state as the newly formed A-site-bound peptidyl-tRNA and P-site-bound deacylated tRNA move to the P and E sites, respectively. Catalyzes the coordinated movement of the two tRNA molecules, the mRNA and conformational changes in the ribosome. The sequence is that of Elongation factor G from Pediococcus pentosaceus (strain ATCC 25745 / CCUG 21536 / LMG 10740 / 183-1w).